We begin with the raw amino-acid sequence, 888 residues long: MSLTRFSLCLLLTLLLAAIPVYLASPDPGVRILRSPESTVAPPGDEVVFVCETSLPPEHFEWSYASSRSRFRYLKSGNHNISITHDNDISKLRVVVSLETLGEYRCVAWFGPLAVTSTTARLELAALSGGGGDEGFKGNQAHWRVTAGNTVQWHCGHIESNPAPSWSFYYNDIELPAASTLSDSNGTLLLSNVSVASSGSYRCVATNTASGVRLALPSRLELQVSAEAMPATAPHLLDGQRVRTKVARVGESVLLLCPGVGCPSPTAIWSSPNVPGAIKNNRTRVLPYGLQINELQALDGGTYICYLDNGIRPALKHSIQLLVQQAPRIVLAPSANLTNEGEAMQLECVATGIPEPEIYWLLNGNNSANDSKANPGSNGILILQSVQKRHAGYVQCFARNSLGEDSAGTILQVNPTQIQTGDGGGGSRAYVRPQQHMFGRKQKQQTQMVPPSAPNVTRLSDESVMLRWHVMPNEGLPIKFFKVQYRMLTGTGKSWQTTNENIPYGKERNDYGAVKNFTSSVTGLRPDRRYRFRIMAVYSNNDNKESNTSGKFFLQRGATLAPLAVPSLVDIEEYSQTAVVLHWDLTSDADEDLISGYYAYYRPSASAGEYLKATIDGAKSRSFQISALEPGTIYEFKLQSFSAVAASEFSALKQGRTQRPRVSTTTEPAVHAMDTTTPSHNETFNLNPLLTGTIGGGALLVLLVVSACLCLCRRRSSRGTNQQNKPRLAELREDFVPLNTCSPNKPRTRHLHITLNPLAQQQQQQQQQQQQQQQQQHEEKDTQDNDMSYFQRPPVVYDAEALGFNGMARMSSSSLRRSQRTLERAAAAGGGAGSGTNNNNLNQPTDGSTADSPRLQASNKPGRVILKRARLSSRSENLSSGSLNSVGV.

The signal sequence occupies residues 1 to 24; sequence MSLTRFSLCLLLTLLLAAIPVYLA. The Extracellular portion of the chain corresponds to 25–688; it reads SPDPGVRILR…SHNETFNLNP (664 aa). 4 Ig-like C2-type domains span residues 28-123, 134-215, 234-321, and 327-414; these read PGVR…ARLE, EGFK…VRLA, PHLL…SIQL, and PRIV…LQVN. 3 disulfides stabilise this stretch: Cys-51–Cys-106, Cys-155–Cys-203, and Cys-257–Cys-305. Residues Asn-80, Asn-185, Asn-192, Asn-281, Asn-336, Asn-365, Asn-369, and Asn-455 are each glycosylated (N-linked (GlcNAc...) asparagine). A disulfide bridge connects residues Cys-348 and Cys-396. 2 Fibronectin type-III domains span residues 450-557 and 565-660; these read PPSA…LQRG and VPSL…TQRP. Residues Arg-486 and Lys-493 each contribute to the heparin site. N-linked (GlcNAc...) asparagine glycosylation is present at Asn-516. A heparin-binding site is contributed by Arg-531. The N-linked (GlcNAc...) asparagine glycan is linked to Asn-547. Positions 655-667 are enriched in polar residues; the sequence is GRTQRPRVSTTTE. Positions 655 to 679 are disordered; the sequence is GRTQRPRVSTTTEPAVHAMDTTTPS. Residue Asn-681 is glycosylated (N-linked (GlcNAc...) asparagine). A helical transmembrane segment spans residues 689-709; the sequence is LLTGTIGGGALLVLLVVSACL. Topologically, residues 710-888 are cytoplasmic; that stretch reads CLCRRRSSRG…SSGSLNSVGV (179 aa). 3 disordered regions span residues 759–789, 812–864, and 869–888; these read AQQQ…DMSY, SSSL…PGRV, and ARLS…SVGV. Over residues 760-775 the composition is skewed to low complexity; that stretch reads QQQQQQQQQQQQQQQQ. The segment covering 843 to 859 has biased composition (polar residues); sequence QPTDGSTADSPRLQASN. The span at 872–888 shows a compositional bias: low complexity; the sequence is SSRSENLSSGSLNSVGV.

The protein belongs to the immunoglobulin superfamily. IHOG family. As to quaternary structure, homodimer. Heterotetramer; 2 iHog chains bind 2 hh chains when facilitated by heparin, heparin is required to promote high-affinity interactions between hh and iHog.

It localises to the membrane. Its function is as follows. Mediates response to the active Hedgehog (Hh) protein signal in embryos, functioning upstream or at the level of patched (ptc). This is Interference hedgehog from Drosophila grimshawi (Hawaiian fruit fly).